The primary structure comprises 142 residues: Large ribosomal subunit protein uL11 (142 aa).

Belongs to the universal ribosomal protein uL11 family. As to quaternary structure, part of the ribosomal stalk of the 50S ribosomal subunit. Interacts with L10 and the large rRNA to form the base of the stalk. L10 forms an elongated spine to which L12 dimers bind in a sequential fashion forming a multimeric L10(L12)X complex. In terms of processing, one or more lysine residues are methylated.

Forms part of the ribosomal stalk which helps the ribosome interact with GTP-bound translation factors. The polypeptide is Large ribosomal subunit protein uL11 (Vibrio vulnificus (strain YJ016)).